Here is a 161-residue protein sequence, read N- to C-terminus: uncharacterized protein (161 aa).

Polar residues predominate over residues 1–10; it reads MSKQQEQDTP. Disordered stretches follow at residues 1 to 20, 55 to 84, and 118 to 161; these read MSKQQEQDTPSFGEIRQRLQ, KKTREEQIAEDEHAASLRRLGHAERSMSDE, and LLQQ…ANNS. A coiled-coil region spans residues 82–107; that stretch reads SDEEYARQLQEEMDRLDASIQMDKEA. Residues 144–161 show a composition bias toward low complexity; it reads QQSSNTTTSSSCQSANNS.

This is an uncharacterized protein from Caenorhabditis elegans.